The sequence spans 517 residues: GMP synthase [glutamine-hydrolyzing] (517 aa).

In terms of domain architecture, Glutamine amidotransferase type-1 spans arginine 9–leucine 199. The Nucleophile role is filled by cysteine 86. Active-site residues include histidine 173 and glutamate 175. The GMPS ATP-PPase domain occupies tryptophan 200–arginine 392. Position 227-233 (serine 227–serine 233) interacts with ATP.

Homodimer.

The catalysed reaction is XMP + L-glutamine + ATP + H2O = GMP + L-glutamate + AMP + diphosphate + 2 H(+). Its pathway is purine metabolism; GMP biosynthesis; GMP from XMP (L-Gln route): step 1/1. Its function is as follows. Catalyzes the synthesis of GMP from XMP. The polypeptide is GMP synthase [glutamine-hydrolyzing] (Aliivibrio fischeri (strain MJ11) (Vibrio fischeri)).